We begin with the raw amino-acid sequence, 318 residues long: 2-keto-3-deoxygluconate permease (318 aa).

10 helical membrane passes run 10-30, 42-62, 76-96, 105-125, 139-159, 162-182, 199-219, 224-244, 263-283, and 289-309; these read IPGGLMLVPLFLGALCNTFTP, GLITGTIPILAVWFFCMGASI, VLVITKLATAWVVALIAGTFL, LLAGISVLALVAAMDMTNGGL, AGAFVLMSLESGPLMTMVILG, GIATFEPQLFVGAVLPFLIGF, VQTLIPFFAFALGNTINLAVI, FAGIFLGVLVIVVTGIPLIIA, AGAAVATPLLIANMAPEFAPV, and ALVATSVIVTSVLVPVITALW.

The protein belongs to the KdgT transporter family.

The protein localises to the cell inner membrane. The enzyme catalyses 2-dehydro-3-deoxy-D-gluconate(in) + H(+)(in) = 2-dehydro-3-deoxy-D-gluconate(out) + H(+)(out). In terms of biological role, catalyzes the proton-dependent uptake of 2-keto-3-deoxygluconate (KDG) into the cell. This chain is 2-keto-3-deoxygluconate permease, found in Pectobacterium carotovorum subsp. carotovorum (strain PC1).